The chain runs to 103 residues: MAIQGIEGVLQQMQATMQVARNNAVETPPSVSFAGELQAALGRISDTQNAARTQAEKFAIGTPGVALNDVMVDLQKSSISLQMGIQVRNKLVAAYQDIMNMQV.

The protein belongs to the FliE family.

The protein localises to the bacterial flagellum basal body. The protein is Flagellar hook-basal body complex protein FliE of Cronobacter sakazakii (strain ATCC BAA-894) (Enterobacter sakazakii).